A 165-amino-acid chain; its full sequence is Chorismate pyruvate-lyase (165 aa).

Substrate-binding residues include Met-35, Arg-77, Leu-115, and Glu-156.

This sequence belongs to the UbiC family. In terms of assembly, monomer.

The protein resides in the cytoplasm. The enzyme catalyses chorismate = 4-hydroxybenzoate + pyruvate. It participates in cofactor biosynthesis; ubiquinone biosynthesis. Removes the pyruvyl group from chorismate, with concomitant aromatization of the ring, to provide 4-hydroxybenzoate (4HB) for the ubiquinone pathway. This is Chorismate pyruvate-lyase from Citrobacter koseri (strain ATCC BAA-895 / CDC 4225-83 / SGSC4696).